Here is a 64-residue protein sequence, read N- to C-terminus: Defensin beta 4A (64 aa).

An N-terminal signal peptide occupies residues 1-23 (MRVLYLLFSFLFIFLMPLPGVFG). Intrachain disulfides connect Cys31–Cys60, Cys38–Cys53, and Cys43–Cys61. The tract at residues 33–48 (KSGAICHPVFCPRRYK) is phosphatidylinositol 4,5-bisphosphate (PIP2) binding.

This sequence belongs to the beta-defensin family. LAP/TAP subfamily. In terms of assembly, monomer. Homodimer. Expressed in lung epithelial cells (at protein level). Expressed in foreskin, lung and trachea. Lower expression in kidney, uterus and salivary gland tissue. Expressed in epithelial cells of the respiratory tract, with higher expression in distal parenchyma of the lung, trachea, and tonsils, and lower expression in pharynx and adenoid, and low expression in tongue and larynx.

The protein resides in the secreted. Its function is as follows. Exhibits antimicrobial activity against Gram-negative bacteria and Gram-positive bacteria, with highest activity against Gram-negative bacteria. Antimicrobial activity against P.aruginosa seems to be salt-sensitive and is reduced with high salt concentrations greater than 25 mM. Also exhibits antimicrobial activity against the yeast C.albicans. Permeabilizes C.albicans cell membranes via targeting plasma membrane lipid phosphatidylinositol 4,5-bisphosphate (PIP2), thereby leading to cell fragmentation and cell death. Acts as a ligand for C-C chemokine receptor CCR6. Binds to CCR6 and induces chemotactic activity of CCR6-expressing cells, such as immature dendritic cells and memory T cells. This Homo sapiens (Human) protein is Defensin beta 4A (DEFB4A).